A 538-amino-acid chain; its full sequence is Ribosome-associated complex subunit SSZ1 (538 aa).

Positions 400–538 are peptide-binding domain; the sequence is PVIVNTPHLK…KTGNAVKGEL (139 aa). The disordered stretch occupies residues 464–484; it reads PIPKEENAEEDDESEWSDDEP. Acidic residues predominate over residues 470–484; that stretch reads NAEEDDESEWSDDEP. Residues S477 and S480 each carry the phosphoserine modification.

This sequence belongs to the heat shock protein 70 family. In terms of assembly, RAC is a heterodimer of the Hsp70/DnaK-type chaperone SSZ1 and the Hsp40/DnaJ-type chaperone ZUO1. RAC associates with ribosomes via ZUO1.

The protein localises to the cytoplasm. Functionally, component of the ribosome-associated complex (RAC), a heterodimeric chaperone complex involved in regulation of accurate translation termination and in folding or maintaining nascent polypeptides in a folding-competent state. RAC stimulates the ATPase activity of the ribosome-associated pool of Hsp70-type chaperones SSB1/SSB2 that bind to the nascent polypeptide chain. SSZ1 is required for ZUO1 to function efficiently as a J-protein for SSB1/SSB2. Also involved in pleiotropic drug resistance by post-translational activation of transcription factor PDR1. The polypeptide is Ribosome-associated complex subunit SSZ1 (SSZ1) (Saccharomyces cerevisiae (strain ATCC 204508 / S288c) (Baker's yeast)).